We begin with the raw amino-acid sequence, 188 residues long: dCTP deaminase, dUMP-forming (188 aa).

DCTP contacts are provided by residues 101-106, D119, 127-129, Q148, Y162, and Q174; these read KSSLGR and TLE. The active-site Proton donor/acceptor is the E129.

This sequence belongs to the dCTP deaminase family. As to quaternary structure, homotrimer.

It carries out the reaction dCTP + 2 H2O = dUMP + NH4(+) + diphosphate. Its pathway is pyrimidine metabolism; dUMP biosynthesis; dUMP from dCTP: step 1/1. In terms of biological role, bifunctional enzyme that catalyzes both the deamination of dCTP to dUTP and the hydrolysis of dUTP to dUMP without releasing the toxic dUTP intermediate. This chain is dCTP deaminase, dUMP-forming, found in Corynebacterium jeikeium (strain K411).